The sequence spans 549 residues: Serine/threonine-protein phosphatase PPQ (549 aa).

Residues 1-13 (MRRSPSRSNNNFA) are compositionally biased toward polar residues. 4 disordered regions span residues 1–50 (MRRS…RSLP), 64–85 (YNTL…DNLL), 133–158 (TSST…NYSS), and 189–219 (SRVK…PKSS). Composition is skewed to low complexity over residues 16–32 (NCST…TTPS) and 68–83 (ASAG…SNDN). A compositionally biased stretch (polar residues) spans 205–217 (APSSPTSGIPNPK). Positions 301, 303, 329, and 361 each coordinate Mn(2+). Histidine 362 (proton donor) is an active-site residue. Positions 410 and 485 each coordinate Mn(2+).

This sequence belongs to the PPP phosphatase family. PP-Z subfamily. The cofactor is Mn(2+).

The enzyme catalyses O-phospho-L-seryl-[protein] + H2O = L-seryl-[protein] + phosphate. It catalyses the reaction O-phospho-L-threonyl-[protein] + H2O = L-threonyl-[protein] + phosphate. Its function is as follows. Phosphatase involved in the regulation of protein synthesis. Affects translational accuracy. In Saccharomyces cerevisiae (strain ATCC 204508 / S288c) (Baker's yeast), this protein is Serine/threonine-protein phosphatase PPQ (PPQ1).